The chain runs to 651 residues: Peptide-N(4)-(N-acetyl-beta-glucosaminyl)asparagine amidase (651 aa).

Alanine 2 bears the N-acetylalanine mark. The PUB domain occupies 30 to 91 (EASKLLLTYA…EGETHLIFPK (62 aa)). Positions 247, 250, 280, and 283 each coordinate Zn(2+). Residue cysteine 306 is the Nucleophile of the active site. Residues histidine 333 and aspartate 350 contribute to the active site. Residues 451-651 (ELGGRVSGSL…LEIIITFNDL (201 aa)) enclose the PAW domain.

It belongs to the transglutaminase-like superfamily. PNGase family. Component of a complex required to couple retrotranslocation, ubiquitination and deglycosylation composed of NGLY1, SAKS1, AMFR, VCP and RAD23B. Interacts with the proteasome components RAD23B and PSMC1. Interacts with directly with VCP. Interacts with DERL1, bringing it close to the endoplasmic reticulum membrane. Interacts with SAKS1. Requires Zn(2+) as cofactor. As to expression, ubiquitously expressed with highest level in testis.

The protein resides in the cytoplasm. It carries out the reaction Hydrolysis of an N(4)-(acetyl-beta-D-glucosaminyl)asparagine residue in which the glucosamine residue may be further glycosylated, to yield a (substituted) N-acetyl-beta-D-glucosaminylamine and a peptide containing an aspartate residue.. With respect to regulation, inhibited by Z-VAD-fmk, a well-known caspase inhibitor, which inhibits enzyme activity through covalent binding of the carbohydrate to the single Cys-306 residue. In terms of biological role, specifically deglycosylates the denatured form of N-linked glycoproteins in the cytoplasm and assists their proteasome-mediated degradation. Cleaves the beta-aspartyl-glucosamine (GlcNAc) of the glycan and the amide side chain of Asn, converting Asn to Asp. Prefers proteins containing high-mannose over those bearing complex type oligosaccharides. Can recognize misfolded proteins in the endoplasmic reticulum that are exported to the cytosol to be destroyed and deglycosylate them, while it has no activity toward native proteins. Deglycosylation is a prerequisite for subsequent proteasome-mediated degradation of some, but not all, misfolded glycoproteins. The chain is Peptide-N(4)-(N-acetyl-beta-glucosaminyl)asparagine amidase (Ngly1) from Mus musculus (Mouse).